A 360-amino-acid chain; its full sequence is MAEKVNVCIVGSGNWGSAIAKIVGANAAALPEFEERVTMFVYEEMIDGKKLTEIINETHENVKYLKGHKLPTNVVAVPDLVEAAKNADILIFVVPHQFIPNFCKQLLGKIKPNAIAISLIKGFDKAEGGGIDLISHIITRHLKIPCAVLMGANLANEVAEGNFCETTIGCTDKKYGKVLRDLFQANHFRVVVVEDADAVEVCGALKNIVACGAGFVDGLKLGDNTKAAVIRLGLMEMIRFVDVFYPGSKLSTFFESCGVADLITTCYGGRNRRVSEAFVTSGKTIEELEKEMLNGQKLQGPPTAEEVNYMLKNKGLEDKFPLFTAIHKICINQLKPKDLIDCIRNHPEHMDTFIMPSPKL.

NAD(+)-binding positions include 11–16 (GSGNWG), F98, K121, and A155. Residue K121 coordinates substrate. Catalysis depends on K206, which acts as the Proton acceptor. Residues R270 and Q299 each contribute to the NAD(+) site. Residue 270 to 271 (RN) participates in substrate binding.

Belongs to the NAD-dependent glycerol-3-phosphate dehydrogenase family. In terms of assembly, homodimer.

Its subcellular location is the cytoplasm. It carries out the reaction sn-glycerol 3-phosphate + NAD(+) = dihydroxyacetone phosphate + NADH + H(+). It participates in phospholipid metabolism; alpha-glycerophosphate cycle. This Drosophila kanekoi (Fruit fly) protein is Glycerol-3-phosphate dehydrogenase [NAD(+)], cytoplasmic (Gpdh1).